The sequence spans 130 residues: Transcription antitermination protein NusB (130 aa).

This sequence belongs to the NusB family.

Involved in transcription antitermination. Required for transcription of ribosomal RNA (rRNA) genes. Binds specifically to the boxA antiterminator sequence of the ribosomal RNA (rrn) operons. This chain is Transcription antitermination protein NusB, found in Geobacillus kaustophilus (strain HTA426).